Here is a 328-residue protein sequence, read N- to C-terminus: Radiation response metalloprotease IrrE (328 aa).

A disordered region spans residues 1-31 (MPSANVSPPCPSGVRGGGMGPKAKAEASKPH). H118 is a binding site for Zn(2+). Residue E119 is part of the active site. Positions 122 and 149 each coordinate Zn(2+). 2 disordered regions span residues 217-238 (PREQ…LTVR) and 309-328 (RLGR…DAAQ).

Its function is as follows. Plays a central regulatory role in DNA repair and protection pathways in response to radiation stress. Acts as a site-specific metalloprotease that cleaves and inactivates the repressor protein DdrO, resulting in induced expression of genes required for DNA repair and cell survival after exposure to radiation. Regulates the expression of dozens of proteins from different pathways, including the important DNA repair proteins RecA and PprA. Binds to the promoters of recA and pprA. In Deinococcus radiodurans (strain ATCC 13939 / DSM 20539 / JCM 16871 / CCUG 27074 / LMG 4051 / NBRC 15346 / NCIMB 9279 / VKM B-1422 / R1), this protein is Radiation response metalloprotease IrrE.